Reading from the N-terminus, the 82-residue chain is UPF0729 protein C18orf32 homolog (82 aa).

Residues 1-37 (MVCIPCIVIPVLLWVYKKFLEPIVYPFISPIINRIWP) form a necessary for its localzation to the endoplasmic reticulum and lipid droplets region. The tract at residues 46–82 (TSAKKEESNGTCKASGTSITNGSVSRGEEAVPDKKTD) is disordered. Residues 54–69 (NGTCKASGTSITNGSV) show a composition bias toward polar residues. Residues 71–82 (RGEEAVPDKKTD) are compositionally biased toward basic and acidic residues.

The protein belongs to the UPF0729 family.

It is found in the endoplasmic reticulum. Its subcellular location is the lipid droplet. The protein is UPF0729 protein C18orf32 homolog of Xenopus tropicalis (Western clawed frog).